Consider the following 278-residue polypeptide: Large ribosomal subunit protein uL2 (278 aa).

Disordered regions lie at residues 1 to 20 (MAIRKYKPTTPGRRGSSVSD), 25 to 57 (TRSTPEKSLLRPLTKSGGRNAHGRITTRHRGGG), and 224 to 278 (VVMN…GKKR). Basic residues-rich tracts occupy residues 45–57 (AHGRITTRHRGGG) and 269–278 (VRRRKTGKKR).

Belongs to the universal ribosomal protein uL2 family. As to quaternary structure, part of the 50S ribosomal subunit. Forms a bridge to the 30S subunit in the 70S ribosome.

In terms of biological role, one of the primary rRNA binding proteins. Required for association of the 30S and 50S subunits to form the 70S ribosome, for tRNA binding and peptide bond formation. It has been suggested to have peptidyltransferase activity; this is somewhat controversial. Makes several contacts with the 16S rRNA in the 70S ribosome. The polypeptide is Large ribosomal subunit protein uL2 (Nocardia farcinica (strain IFM 10152)).